Here is a 291-residue protein sequence, read N- to C-terminus: S-adenosylmethionine uptake transporter (291 aa).

10 consecutive transmembrane segments (helical) span residues 4–24 (ALKT…SSSA), 41–61 (VAFF…VYYG), 74–91 (ILRG…TYGL), 98–118 (TATV…VFFL), 121–141 (NIIW…VITL), 148–168 (FNPE…LDII), 178–198 (MISM…PAAA), 206–226 (LFEL…LFLL), 237–257 (ATAP…YFIF), and 260–280 (FPDK…LFII). EamA domains are found at residues 21–141 (SSSA…VITL) and 160–280 (ISFA…LFII).

This sequence belongs to the drug/metabolite transporter (DMT) superfamily. 10 TMS drug/metabolite exporter (DME) (TC 2.A.7.3) family.

The protein resides in the cell inner membrane. Transports S-adenosylmethionine. This Rickettsia bellii (strain RML369-C) protein is S-adenosylmethionine uptake transporter (sam).